A 306-amino-acid polypeptide reads, in one-letter code: MPYDTMQQVIGLAPKKRGTLIQKGINFSYVPLNEEGGVDYEEAEKVLKRDQPHIVVIQRSRGYDTRQSYTVDQIKKMTAFVKKVSPESLVFVDNCYGEFSEKHEPTEYGVDFTAGSLIKNAGGGIAQTGGYIVGKEELVENAAIRLTAPGIGKEEGATLTNMHEFYEGFFLAPHTTGEAIKGMIFSAALLEKMGCEVTPKWHEPRTDLIQTIIFNVPEKMINFTKEVQKNSPIDSFVEPIPSDMPGYEDKVIMAAGNFVSGSTMEFSADGPIRPPYALYMQCGLTYAHDRIAVTNAVNHLFFKENG.

It to L.delbrueckii similar ORF in glnA 5'region.

This is an uncharacterized protein from Lactobacillus delbrueckii subsp. bulgaricus.